Consider the following 437-residue polypeptide: tRNA-2-methylthio-N(6)-dimethylallyladenosine synthase (437 aa).

The MTTase N-terminal domain maps to 3-120; that stretch reads RKLFIETHGC…LPEMIDAART (118 aa). Positions 12, 49, 83, 157, 161, and 164 each coordinate [4Fe-4S] cluster. One can recognise a Radical SAM core domain in the interval 143 to 370; it reads RVDGPSAYVS…QQRINQQGFE (228 aa). One can recognise a TRAM domain in the interval 373–437; the sequence is RRMVGTTQRI…PHSLRGSLLS (65 aa).

It belongs to the methylthiotransferase family. MiaB subfamily. Monomer. Requires [4Fe-4S] cluster as cofactor.

Its subcellular location is the cytoplasm. It catalyses the reaction N(6)-dimethylallyladenosine(37) in tRNA + (sulfur carrier)-SH + AH2 + 2 S-adenosyl-L-methionine = 2-methylsulfanyl-N(6)-dimethylallyladenosine(37) in tRNA + (sulfur carrier)-H + 5'-deoxyadenosine + L-methionine + A + S-adenosyl-L-homocysteine + 2 H(+). Its function is as follows. Catalyzes the methylthiolation of N6-(dimethylallyl)adenosine (i(6)A), leading to the formation of 2-methylthio-N6-(dimethylallyl)adenosine (ms(2)i(6)A) at position 37 in tRNAs that read codons beginning with uridine. In Stutzerimonas stutzeri (strain A1501) (Pseudomonas stutzeri), this protein is tRNA-2-methylthio-N(6)-dimethylallyladenosine synthase.